The sequence spans 337 residues: DNA-directed RNA polymerase subunit alpha (337 aa).

The alpha N-terminal domain (alpha-NTD) stretch occupies residues 1 to 233 (MVREEVAGST…DLFLPFLHTE (233 aa)). The interval 267 to 337 (IPLNCIFIDQ…LPMDLPKNKF (71 aa)) is alpha C-terminal domain (alpha-CTD).

The protein belongs to the RNA polymerase alpha chain family. In plastids the minimal PEP RNA polymerase catalytic core is composed of four subunits: alpha, beta, beta', and beta''. When a (nuclear-encoded) sigma factor is associated with the core the holoenzyme is formed, which can initiate transcription.

The protein localises to the plastid. It is found in the chloroplast. The enzyme catalyses RNA(n) + a ribonucleoside 5'-triphosphate = RNA(n+1) + diphosphate. DNA-dependent RNA polymerase catalyzes the transcription of DNA into RNA using the four ribonucleoside triphosphates as substrates. The chain is DNA-directed RNA polymerase subunit alpha from Oryza nivara (Indian wild rice).